A 434-amino-acid chain; its full sequence is F-box/LRR-repeat protein 21 (434 aa).

In terms of domain architecture, F-box spans 39–85; it reads RLDWGSLPHRVVLCVFQYLPLIDRARASSVCRRWNEVFHIPDLWRKF. 7 LRR repeats span residues 140–165, 187–213, 214–239, 242–265, 322–347, 349–374, and 375–400; these read LVNCSTQTLGLISTAKPSFMTMSKSH, DTPVDDPSLSILVANNSDTLRRLKMSS, CPHVSSDGILCVADHCQGLRELALNY, LSDELLLALSNETHVNLEHLRIDV, GRSVSKGILGRLSLNCPRLVELVVCA, GIQVIDNELICIAEHCKNLTALGLSE, and CEVSCTAFIEFVRLCGRKLTHLSIME.

In terms of assembly, part of the SCF (SKP1-CUL1-F-box) E3 ubiquitin-protein ligase complex SCF(FBXL21) composed of CUL1, SKP1, RBX1 and FBXL21. Interacts with CRY2. Interacts with CRY1. Expressed in the adenohypophysis, hypothalamus (especially in the suprachiasmatic nucleus or nuclei, SCN) and pineal, all neuroendocrine structures associated with timing and homeostasis.

The protein resides in the cytoplasm. It localises to the cytosol. The protein localises to the nucleus. The protein operates within protein modification; protein ubiquitination. In terms of biological role, substrate-recognition component of the SCF(FBXL21) E3 ubiquitin ligase complex involved in circadian rhythm function. Plays a key role in the maintenance of both the speed and the robustness of the circadian clock oscillation. The SCF(FBXL21) complex mainly acts in the cytosol and mediates ubiquitination of CRY proteins (CRY1 and CRY2), leading to CRY proteins stabilization. The SCF(FBXL21) complex counteracts the activity of the SCF(FBXL3) complex and protects CRY proteins from degradation. Involved in the hypothalamic suprachiasmatic nucleus (SCN) clock regulating temporal organization of the daily activities. This Ovis aries (Sheep) protein is F-box/LRR-repeat protein 21 (Fbxl21).